The sequence spans 162 residues: Dihydrofolate reductase type 3 (162 aa).

A DHFR domain is found at 2–160 (LISLIAALAH…YACEFVTLSR (159 aa)).

The protein belongs to the dihydrofolate reductase family. As to quaternary structure, monomer.

It catalyses the reaction (6S)-5,6,7,8-tetrahydrofolate + NADP(+) = 7,8-dihydrofolate + NADPH + H(+). It participates in cofactor biosynthesis; tetrahydrofolate biosynthesis; 5,6,7,8-tetrahydrofolate from 7,8-dihydrofolate: step 1/1. In terms of biological role, key enzyme in folate metabolism. Catalyzes an essential reaction for de novo glycine and purine synthesis, and for DNA precursor synthesis. The sequence is that of Dihydrofolate reductase type 3 (dhfrIII) from Salmonella typhimurium.